The sequence spans 359 residues: Fe-S cluster assembly protein DRE2 (359 aa).

Positions methionine 1–asparagine 159 are N-terminal SAM-like domain. The disordered stretch occupies residues lysine 152 to valine 187. Low complexity predominate over residues serine 155 to serine 166. Positions asparagine 159–leucine 228 are linker. Over residues proline 167–asparagine 177 the composition is skewed to polar residues. [2Fe-2S] cluster is bound by residues cysteine 240, cysteine 252, cysteine 255, and cysteine 257. The segment at cysteine 240–cysteine 257 is fe-S binding site A. [4Fe-4S] cluster contacts are provided by cysteine 322, cysteine 325, cysteine 333, and cysteine 336. 2 consecutive short sequence motifs (cx2C motif) follow at residues cysteine 322–cysteine 325 and cysteine 333–cysteine 336. The tract at residues cysteine 322–cysteine 336 is fe-S binding site B.

The protein belongs to the anamorsin family. In terms of assembly, monomer. Interacts with TAH18. Interacts with MIA40. The cofactor is [2Fe-2S] cluster. It depends on [4Fe-4S] cluster as a cofactor.

The protein localises to the cytoplasm. The protein resides in the mitochondrion intermembrane space. Functionally, component of the cytosolic iron-sulfur (Fe-S) protein assembly (CIA) machinery required for the maturation of extramitochondrial Fe-S proteins. Part of an electron transfer chain functioning in an early step of cytosolic Fe-S biogenesis, facilitating the de novo assembly of a [4Fe-4S] cluster on the scaffold complex CFD1-NBP35. Electrons are transferred to DRE2 from NADPH via the FAD- and FMN-containing protein TAH18. TAH18-DRE2 are also required for the assembly of the diferric tyrosyl radical cofactor of ribonucleotide reductase (RNR), probably by providing electrons for reduction during radical cofactor maturation in the catalytic small subunit RNR2. In Scheffersomyces stipitis (strain ATCC 58785 / CBS 6054 / NBRC 10063 / NRRL Y-11545) (Yeast), this protein is Fe-S cluster assembly protein DRE2.